A 280-amino-acid chain; its full sequence is 2-dehydro-3-deoxyphosphooctonate aldolase (280 aa).

The protein belongs to the KdsA family.

The protein localises to the cytoplasm. It catalyses the reaction D-arabinose 5-phosphate + phosphoenolpyruvate + H2O = 3-deoxy-alpha-D-manno-2-octulosonate-8-phosphate + phosphate. It functions in the pathway carbohydrate biosynthesis; 3-deoxy-D-manno-octulosonate biosynthesis; 3-deoxy-D-manno-octulosonate from D-ribulose 5-phosphate: step 2/3. It participates in bacterial outer membrane biogenesis; lipopolysaccharide biosynthesis. The polypeptide is 2-dehydro-3-deoxyphosphooctonate aldolase (Coxiella burnetii (strain Dugway 5J108-111)).